We begin with the raw amino-acid sequence, 154 residues long: 6,7-dimethyl-8-ribityllumazine synthase (154 aa).

Residues F22, 56-58 (AFE), and 80-82 (TVI) each bind 5-amino-6-(D-ribitylamino)uracil. 85–86 (AT) provides a ligand contact to (2S)-2-hydroxy-3-oxobutyl phosphate. H88 (proton donor) is an active-site residue. Position 113 (F113) interacts with 5-amino-6-(D-ribitylamino)uracil. R127 provides a ligand contact to (2S)-2-hydroxy-3-oxobutyl phosphate.

This sequence belongs to the DMRL synthase family. Forms an icosahedral capsid composed of 60 subunits, arranged as a dodecamer of pentamers.

It carries out the reaction (2S)-2-hydroxy-3-oxobutyl phosphate + 5-amino-6-(D-ribitylamino)uracil = 6,7-dimethyl-8-(1-D-ribityl)lumazine + phosphate + 2 H2O + H(+). The protein operates within cofactor biosynthesis; riboflavin biosynthesis; riboflavin from 2-hydroxy-3-oxobutyl phosphate and 5-amino-6-(D-ribitylamino)uracil: step 1/2. Catalyzes the formation of 6,7-dimethyl-8-ribityllumazine by condensation of 5-amino-6-(D-ribitylamino)uracil with 3,4-dihydroxy-2-butanone 4-phosphate. This is the penultimate step in the biosynthesis of riboflavin. The chain is 6,7-dimethyl-8-ribityllumazine synthase from Bacillus licheniformis (strain ATCC 14580 / DSM 13 / JCM 2505 / CCUG 7422 / NBRC 12200 / NCIMB 9375 / NCTC 10341 / NRRL NRS-1264 / Gibson 46).